The following is a 325-amino-acid chain: Aspartate carbamoyltransferase catalytic subunit (325 aa).

Carbamoyl phosphate is bound by residues Arg64 and Thr65. Position 92 (Lys92) interacts with L-aspartate. Carbamoyl phosphate contacts are provided by Arg114, His142, and Gln145. L-aspartate contacts are provided by Arg176 and Arg230. Carbamoyl phosphate is bound by residues Gly271 and Pro272.

It belongs to the aspartate/ornithine carbamoyltransferase superfamily. ATCase family. Heterododecamer (2C3:3R2) of six catalytic PyrB chains organized as two trimers (C3), and six regulatory PyrI chains organized as three dimers (R2).

The catalysed reaction is carbamoyl phosphate + L-aspartate = N-carbamoyl-L-aspartate + phosphate + H(+). It functions in the pathway pyrimidine metabolism; UMP biosynthesis via de novo pathway; (S)-dihydroorotate from bicarbonate: step 2/3. Its function is as follows. Catalyzes the condensation of carbamoyl phosphate and aspartate to form carbamoyl aspartate and inorganic phosphate, the committed step in the de novo pyrimidine nucleotide biosynthesis pathway. The protein is Aspartate carbamoyltransferase catalytic subunit of Nitratidesulfovibrio vulgaris (strain DSM 19637 / Miyazaki F) (Desulfovibrio vulgaris).